Reading from the N-terminus, the 287-residue chain is Phosphatidylserine decarboxylase proenzyme (287 aa).

Active-site charge relay system; for autoendoproteolytic cleavage activity residues include Asp90, His147, and Ser252. The active-site Schiff-base intermediate with substrate; via pyruvic acid; for decarboxylase activity is the Ser252. The residue at position 252 (Ser252) is a Pyruvic acid (Ser); by autocatalysis.

The protein belongs to the phosphatidylserine decarboxylase family. PSD-B subfamily. Prokaryotic type I sub-subfamily. As to quaternary structure, heterodimer of a large membrane-associated beta subunit and a small pyruvoyl-containing alpha subunit. Pyruvate serves as cofactor. Post-translationally, is synthesized initially as an inactive proenzyme. Formation of the active enzyme involves a self-maturation process in which the active site pyruvoyl group is generated from an internal serine residue via an autocatalytic post-translational modification. Two non-identical subunits are generated from the proenzyme in this reaction, and the pyruvate is formed at the N-terminus of the alpha chain, which is derived from the carboxyl end of the proenzyme. The autoendoproteolytic cleavage occurs by a canonical serine protease mechanism, in which the side chain hydroxyl group of the serine supplies its oxygen atom to form the C-terminus of the beta chain, while the remainder of the serine residue undergoes an oxidative deamination to produce ammonia and the pyruvoyl prosthetic group on the alpha chain. During this reaction, the Ser that is part of the protease active site of the proenzyme becomes the pyruvoyl prosthetic group, which constitutes an essential element of the active site of the mature decarboxylase.

It localises to the cell membrane. The catalysed reaction is a 1,2-diacyl-sn-glycero-3-phospho-L-serine + H(+) = a 1,2-diacyl-sn-glycero-3-phosphoethanolamine + CO2. It participates in phospholipid metabolism; phosphatidylethanolamine biosynthesis; phosphatidylethanolamine from CDP-diacylglycerol: step 2/2. Functionally, catalyzes the formation of phosphatidylethanolamine (PtdEtn) from phosphatidylserine (PtdSer). The protein is Phosphatidylserine decarboxylase proenzyme of Pseudomonas putida (strain ATCC 700007 / DSM 6899 / JCM 31910 / BCRC 17059 / LMG 24140 / F1).